Reading from the N-terminus, the 694-residue chain is Polyribonucleotide nucleotidyltransferase (694 aa).

Positions 485 and 491 each coordinate Mg(2+). A KH domain is found at Pro552 to Ile611. The S1 motif domain maps to Gly621 to Lys689.

It belongs to the polyribonucleotide nucleotidyltransferase family. The cofactor is Mg(2+).

It is found in the cytoplasm. It catalyses the reaction RNA(n+1) + phosphate = RNA(n) + a ribonucleoside 5'-diphosphate. Its function is as follows. Involved in mRNA degradation. Catalyzes the phosphorolysis of single-stranded polyribonucleotides processively in the 3'- to 5'-direction. This Chlamydia abortus (strain DSM 27085 / S26/3) (Chlamydophila abortus) protein is Polyribonucleotide nucleotidyltransferase.